A 202-amino-acid polypeptide reads, in one-letter code: Lipoprotein signal peptidase (202 aa).

Residues 1-29 (MPDEPTGSADPLTSTEEAGGAGEPNAPAP) are disordered. Helical transmembrane passes span 35 to 55 (MLLS…VVAV), 88 to 108 (GYTW…FWMG), and 112 to 132 (VSPW…GNLV). Catalysis depends on residues D148 and D162. Residues 160–180 (VADPSVVGGAILLVILSIFGF) form a helical membrane-spanning segment.

The protein belongs to the peptidase A8 family.

It is found in the cell membrane. It carries out the reaction Release of signal peptides from bacterial membrane prolipoproteins. Hydrolyzes -Xaa-Yaa-Zaa-|-(S,diacylglyceryl)Cys-, in which Xaa is hydrophobic (preferably Leu), and Yaa (Ala or Ser) and Zaa (Gly or Ala) have small, neutral side chains.. Its pathway is protein modification; lipoprotein biosynthesis (signal peptide cleavage). Its function is as follows. This protein specifically catalyzes the removal of signal peptides from prolipoproteins. This Mycobacterium bovis (strain ATCC BAA-935 / AF2122/97) protein is Lipoprotein signal peptidase.